A 482-amino-acid polypeptide reads, in one-letter code: Protein DETOXIFICATION 13 (482 aa).

12 consecutive transmembrane segments (helical) span residues 39–59 (LICF…LQII), 77–97 (LASS…SCAL), 124–144 (LALV…LLVF), 159–179 (AACL…TRYF), 188–208 (LLIT…LLVY), 218–238 (ALAL…LMCF), 268–288 (AAMI…SGLL), 297–317 (VLSV…AIAA), 337–357 (IVVY…STSL), 381–401 (MAPL…LSGI), 416–436 (LGAF…WIHL), and 439–459 (VGLW…LTLV).

Belongs to the multi antimicrobial extrusion (MATE) (TC 2.A.66.1) family.

Its subcellular location is the membrane. The chain is Protein DETOXIFICATION 13 from Arabidopsis thaliana (Mouse-ear cress).